The following is a 194-amino-acid chain: Extracellular globin-E1 (194 aa).

2 Globin domains span residues aspartate 1 to serine 45 and glycine 55 to alanine 194. Histidine 150 provides a ligand contact to heme b.

The protein belongs to the globin family. In terms of assembly, artemia hemoglobin is a dimer of two similar sized subunits. Each subunit represents a globin chain which exists in two forms (alpha and beta), thus making possible three different phenotypes (HB1, alpha(2), HB2, alpha/beta, HB3, beta(2)). The globin chain is a polymer of eight heme-binding covalently linked domains.

This Artemia sp. (Brine shrimp) protein is Extracellular globin-E1.